Here is a 255-residue protein sequence, read N- to C-terminus: uncharacterized protein (255 aa).

Positions 1–23 (MKRLNKLVLGIIFLFLVISITAG) are cleaved as a signal peptide. Residue cysteine 24 is the site of N-palmitoyl cysteine attachment. The S-diacylglycerol cysteine moiety is linked to residue cysteine 24.

Belongs to the staphylococcal tandem lipoprotein family.

The protein localises to the cell membrane. This is an uncharacterized protein from Staphylococcus aureus (strain USA300).